The following is a 200-amino-acid chain: MAEAADTEVQTTSLEPQARHIVYCGVCSLPPEYCEFGGTAKKCEEWLHENNPSMHQKLYSEETIAANLSTLSIQARERAAKDAAKKEAKAALVETRNQERKAAAKVQIKRVERNKRKHVTVIAGLEAHGLDNKKVAKELGKKFATGSSVTKNPAGGEEITVQGDVCEDVLEWLVEVHGKEVPEDNLEIVEDKKKKKAAAE.

Residues valine 106–histidine 177 form the SUI1 domain.

It belongs to the DENR family. Interacts with the 40S ribosomal subunit.

Its subcellular location is the cytoplasm. In Coccidioides immitis (strain RS) (Valley fever fungus), this protein is Translation machinery-associated protein 22 (TMA22).